The sequence spans 178 residues: Colicin-A immunity protein (178 aa).

The Cytoplasmic segment spans residues 1 to 13 (MMNEHSIDTDNRK). A helical transmembrane segment spans residues 14–37 (ANNALYLFIIIGLIPLLCIFVVYY). The Periplasmic segment spans residues 38 to 68 (KTPDALLLRKIATSTENLPSITSSYNPLMTK). A helical transmembrane segment spans residues 69-89 (VMDIYCKTAPFLALILYILTF). The Cytoplasmic segment spans residues 90 to 105 (KIRKLINNTDRNTVLR). A helical transmembrane segment spans residues 106–123 (SCLLSPLVYAAIVYLFCF). Residues 124-142 (RNFELTTAGRPVRLMATND) lie on the Periplasmic side of the membrane. The helical transmembrane segment at 143–165 (ATLLLFYIGLYSIIFFTTYITLF) threads the bilayer. Over 166–178 (TPVTAFKLLKKRQ) the chain is Cytoplasmic.

The protein resides in the cell inner membrane. Functionally, this protein is able to protect a cell, which harbors the plasmid ColA encoding colicin A, against colicin A. The chain is Colicin-A immunity protein (cai) from Citrobacter freundii.